Consider the following 1146-residue polypeptide: MADQIPLYPVRSAGAAASHRRAAYYSSAGPGPGADRRGRYQLEDESAHLDEMPLMMSEEGFENDESDYHTLPRARITRRKRGLEWFVCGGWKFLCTSCCDWLINVCQRKKELKARTVWLGCPEKCEEKHPRNSIKNQKYNVFTFIPGVLYEQFKFFLNLYFLVVSCSQFVPALKIGYLYTYWAPLGFVLAVTIAREAIDEFRRFQRDKEMNSQLYSKLTVRGKVQVKSSDIQVGDLIIVEKNQRIPSDMVFLRTSEKAGSCFIRTDQLDGETDWKLKVAVSCTQRLPALGDLFSISAYVYAQKPQLDIHSFEGTFTREDSDPPIHESLSIENTLWASTIVASGTVIGVVIYTGKETRSVMNTSNPNNKVGLLDLELNQLTKALFLALVVLSVVMVTLQGFAGPWYRNLFRFLLLFSYIIPISLRVNLDMGKAAYGWMIMKDENIPGTVVRTSTIPEELGRLVYLLTDKTGTLTQNEMVFKRLHLGTVSYGTDTMDEIQSHVLNSYLQVHSQPSGHNPSSAPLRRSQSSTPKVKKSVSSRIHEAVKAIALCHNVTPVYEARAGITGETEFAEADQDFSDENRTYQASSPDEVALVRWTESVGLTLVSRDLASMQLKTPSGQVLTYCILQMFPFTSESKRMGIIVRDESTAEITFYMKGADVAMSTIVQYNDWLEEECGNMAREGLRTLVVAKRTLTEEQYQDFESRYSQAKLSIHDRALKVAAVVESLEREMELLCLTGVEDQLQADVRPTLEMLRNAGIKIWMLTGDKLETATCIAKSSHLVSRTQDIHVFRPVTSRGEAHLELNAFRRKHDCALVISGDSLEVCLRYYEHELVELACQCPAVVCCRCSPTQKAHIVTLLRQHTRKRTCAIGDGGNDVSMIQAADCGIGIEGKEGKQASLAADFSITQFRHIGRLLMVHGRNSYKRSAALGQFVMHRGLIISTMQAVFSSVFYFASVPLYQGFLMVGYATIYTMFPVFSLVLDQDVKPEMAILYPELYKDLTKGRSLSFKTFLIWVLISIYQGGILMYGALLLFEDEFVHVVAISFTALILTELLMVALTIRTWHWLMVVAEFLSLGCYVASLAFLNEYFGIGRVSFGAFLDVAFITTVTFLWKVSAITVVSCLPLYVLKYLKRKLSPPSYSKLSS.

The Cytoplasmic portion of the chain corresponds to Met1 to Thr143. The chain crosses the membrane as a helical span at residues Phe144–Val164. The Extracellular portion of the chain corresponds to Ser165–Ala172. Residues Leu173–Ile193 form a helical membrane-spanning segment. The Cytoplasmic segment spans residues Ala194 to Lys381. The chain crosses the membrane as a helical span at residues Ala382 to Gly402. Over Pro403–Asn407 the chain is Extracellular. Residues Leu408 to Leu427 traverse the membrane as a helical segment. The Cytoplasmic segment spans residues Asp428–Gly938. Asp467 (4-aspartylphosphate intermediate) is an active-site residue. 3 residues coordinate ATP: Asp467, Lys468, and Thr469. Asp467 is a Mg(2+) binding site. Position 469 (Thr469) interacts with Mg(2+). Positions Val508–Ser519 are enriched in polar residues. Positions Val508–Ser535 are disordered. ATP-binding residues include Glu590, Phe632, Lys637, Lys656, Arg685, Thr686, Thr765, Gly766, Asp767, Arg847, and Lys853. Residue Asp873 participates in Mg(2+) binding. Residues Asn876 and Asp877 each contribute to the ATP site. Asp877 contacts Mg(2+). A helical transmembrane segment spans residues Leu939–Leu959. Topologically, residues Tyr960 to Gln961 are extracellular. A helical membrane pass occupies residues Gly962–Leu982. The Cytoplasmic segment spans residues Asp983–Thr1011. The helical transmembrane segment at Phe1012–Leu1032 threads the bilayer. Residues Leu1033–His1040 lie on the Extracellular side of the membrane. Residues Val1041–Ile1061 traverse the membrane as a helical segment. Topologically, residues Arg1062–His1065 are cytoplasmic. The helical transmembrane segment at Trp1066–Leu1086 threads the bilayer. Over Asn1087 to Phe1105 the chain is Extracellular. Residues Ile1106–Val1128 form a helical membrane-spanning segment. Residues Leu1129 to Ser1146 are Cytoplasmic-facing.

The protein belongs to the cation transport ATPase (P-type) (TC 3.A.3) family. Type IV subfamily. Mg(2+) serves as cofactor. Found in most tissues except spleen and muscle. Most abundant in testis. Also detected in fetal tissues.

It is found in the golgi apparatus. The protein localises to the trans-Golgi network membrane. It carries out the reaction ATP + H2O + phospholipidSide 1 = ADP + phosphate + phospholipidSide 2.. In Mus musculus (Mouse), this protein is Probable phospholipid-transporting ATPase IIB (Atp9b).